The chain runs to 273 residues: Tyrosinase (273 aa).

Positions 37, 53, 62, 189, 193, and 215 each coordinate Cu cation.

It belongs to the tyrosinase family. It depends on Cu(2+) as a cofactor.

The enzyme catalyses 2 L-dopa + O2 = 2 L-dopaquinone + 2 H2O. The catalysed reaction is L-tyrosine + O2 = L-dopaquinone + H2O. Functionally, this is a copper-containing oxidase that functions in the formation of pigments such as melanins and other polyphenolic compounds. This Streptomyces lincolnensis protein is Tyrosinase (melC2).